A 245-amino-acid polypeptide reads, in one-letter code: MSNQWWDEWAEKCHSKAHRQLLFWRYLVKQTLLLVEDDKNLADGLLVSLEQAGYDCLHAETIADVKQHWDKADLVILDRQLPDGDSVQHLMDWKKIKDIPVILLTALVTVKDKVTGLDAGANDYLTKPFAEAELFARIRAQLRSPDSGQDDSKVVTSNLTIDKATREVFFNGESITLTRTEFDLLLFLASNLGRVFTRDELLDHVWGYNHFPTTRTVDTHVLQLRQKLPGLEIETLRGVGYKMKA.

The region spanning Thr31 to Leu142 is the Response regulatory domain. At Asp78 the chain carries 4-aspartylphosphate. The ompR/PhoB-type DNA-binding region spans Asp151 to Ala245.

In terms of processing, phosphorylated by VxrA.

The protein localises to the cytoplasm. Functionally, member of the two-component regulatory system VxrB/VxrA involved in the regulation of diverses processes, including virulence, the type VI secretion system (T6SS) and biofilm formation. VxrB positively regulates the expression of the T6SS, a virulence nanomachine that directly translocates effectors into bacterial or host cells, thereby facilitating colonization by competing with sister cells and intestinal microbiota. In addition, it activates vpsL expression and biofilm formation, and represses motility. May regulate biofilm formation via its regulation of key biofilm regulators and cyclic di-GMP levels. Significantly contributes to both attack and defense via T6SS, while also influencing competition via regulation of biofilm matrix production. Is critical for colonization in the infant mouse model. The sequence is that of Transcriptional regulatory protein VxrB from Vibrio cholerae serotype O1 (strain ATCC 39315 / El Tor Inaba N16961).